The sequence spans 412 residues: Lysosomal phospholipase A and acyltransferase (412 aa).

The N-terminal stretch at 1–33 (MDRHLCTCRETQLRSGLLLPLFLLMMLADLTLP) is a signal peptide. Residue D46 participates in substrate binding. An intrachain disulfide couples C65 to C89. N99 carries N-linked (GlcNAc...) asparagine glycosylation. S198 serves as the catalytic Acyl-ester intermediate. S198 serves as a coordination point for Zn(2+). M199 is a substrate binding site. Residues N273 and N289 are each glycosylated (N-linked (GlcNAc...) asparagine). C355 is a Zn(2+) binding site. Residues D360 and H392 each act as charge relay system in the active site. H392 contributes to the Zn(2+) binding site. The N-linked (GlcNAc...) asparagine glycan is linked to N398.

Belongs to the AB hydrolase superfamily. Lipase family. N-glycosylated. N-glycosylation is important for maturation of the enzyme and normal subcellular location. In terms of tissue distribution, detected in blood plasma. Detected in alveolar macrophages (at protein level). Detected in heart, liver, spleen, kidney, thymus, brain and lung.

The protein resides in the secreted. It localises to the lysosome. It is found in the membrane. The enzyme catalyses a 1,2-diacyl-sn-glycero-3-phosphocholine + H2O = a 2-acyl-sn-glycero-3-phosphocholine + a fatty acid + H(+). It catalyses the reaction 1-hexadecanoyl-2-(9Z-octadecenoyl)-sn-glycero-3-phosphocholine + H2O = 2-(9Z-octadecenoyl)-sn-glycero-3-phosphocholine + hexadecanoate + H(+). It carries out the reaction 1,2-di-(9Z-octadecenoyl)-sn-glycero-3-phosphocholine + H2O = 2-(9Z-octadecenoyl)-sn-glycero-3-phosphocholine + (9Z)-octadecenoate + H(+). The catalysed reaction is 1-hexadecanoyl-2-glutaroyl-sn-glycero-3-phosphocholine + H2O = 2-glutaroyl-sn-glycero-3-phosphocholine + hexadecanoate + H(+). The enzyme catalyses 1-hexadecanoyl-2-nonadioyl-sn-glycero-3-phosphocholine + H2O = 2-nonadioyl-sn-glycero-3-phosphocholine + hexadecanoate + H(+). It catalyses the reaction 1-hexadecanoyl-2-(5-oxopentanoyl)-sn-glycero-3-phosphocholine + H2O = 2-(5-oxopentanoyl)-sn-glycero-3-phosphocholine + hexadecanoate + H(+). It carries out the reaction 1-hexadecanoyl-2-(9-oxononanoyl)-sn-glycero-3-phosphocholine + H2O = 2-(9-oxononanoyl)-sn-glycero-3-phosphocholine + hexadecanoate + H(+). The catalysed reaction is 1,2-dihexadecanoyl-sn-glycero-3-phosphocholine + H2O = 2-hexadecanoyl-sn-glycero-3-phosphocholine + hexadecanoate + H(+). The enzyme catalyses a 1,2-diacyl-sn-glycero-3-phosphocholine + H2O = a 1-acyl-sn-glycero-3-phosphocholine + a fatty acid + H(+). It catalyses the reaction 1-hexadecanoyl-2-(9Z-octadecenoyl)-sn-glycero-3-phosphocholine + H2O = 1-hexadecanoyl-sn-glycero-3-phosphocholine + (9Z)-octadecenoate + H(+). It carries out the reaction 1,2-di-(9Z-octadecenoyl)-sn-glycero-3-phosphocholine + H2O = 1-(9Z-octadecenoyl)-sn-glycero-3-phosphocholine + (9Z)-octadecenoate + H(+). The catalysed reaction is 1,2-dihexadecanoyl-sn-glycero-3-phosphocholine + H2O = 1-hexadecanoyl-sn-glycero-3-phosphocholine + hexadecanoate + H(+). The enzyme catalyses a 1-acyl-sn-glycero-3-phosphocholine + H2O = sn-glycerol 3-phosphocholine + a fatty acid + H(+). It catalyses the reaction 1-hexadecanoyl-sn-glycero-3-phosphocholine + H2O = sn-glycerol 3-phosphocholine + hexadecanoate + H(+). It carries out the reaction N-(acetyl)-sphing-4-enine + a 1,2-diacyl-sn-glycero-3-phosphoethanolamine = 1-O-acyl-N-(acetyl)-sphing-4-enine + a 2-acyl-sn-glycero-3-phosphoethanolamine. The catalysed reaction is 1-hexadecanoyl-2-(9Z-octadecenoyl)-sn-glycero-3-phosphoethanolamine + N-(acetyl)-sphing-4-enine = 2-(9Z-octadecenoyl)-sn-glycero-3-phosphoethanolamine + 1-hexadecanoyl-N-(acetyl)-sphing-4-enine. The enzyme catalyses 1-hexadecanoyl-2-(9Z,12Z-octadecadienoyl)-sn-glycero-3-phosphoethanolamine + N-(acetyl)-sphing-4-enine = 2-(9Z,12Z)-octadecadienoyl-sn-glycero-3-phosphoethanolamine + 1-hexadecanoyl-N-(acetyl)-sphing-4-enine. It catalyses the reaction 1-hexadecanoyl-2-(5Z,8Z,11Z,14Z-eicosatetraenoyl)-sn-glycero-3-phosphoethanolamine + N-(acetyl)-sphing-4-enine = 2-(5Z,8Z,11Z,14Z)-eicosatetraenoyl-sn-glycero-3-phosphoethanolamine + 1-hexadecanoyl-N-(acetyl)-sphing-4-enine. It carries out the reaction N-(acetyl)-sphing-4-enine + a 1,2-diacyl-sn-glycero-3-phosphoethanolamine = 1-O-acyl-N-(acetyl)-sphing-4-enine + a 1-acyl-sn-glycero-3-phosphoethanolamine. The catalysed reaction is 1-hexadecanoyl-2-(9Z-octadecenoyl)-sn-glycero-3-phosphoethanolamine + N-(acetyl)-sphing-4-enine = 1-(9Z-octadecenoyl)-N-(acetyl)-sphing-4-enine + 1-hexadecanoyl-sn-glycero-3-phosphoethanolamine. The enzyme catalyses 1-hexadecanoyl-2-(9Z,12Z-octadecadienoyl)-sn-glycero-3-phosphoethanolamine + N-(acetyl)-sphing-4-enine = 1-(9Z,12Z-octadecadienoyl)-N-acetylsphing-4-enine + 1-hexadecanoyl-sn-glycero-3-phosphoethanolamine. It catalyses the reaction 1-hexadecanoyl-2-(5Z,8Z,11Z,14Z-eicosatetraenoyl)-sn-glycero-3-phosphoethanolamine + N-(acetyl)-sphing-4-enine = 1-(5Z,8Z,11Z,14Z)-eicosatetraenoyl-N-(acetyl)-sphing-4-enine + 1-hexadecanoyl-sn-glycero-3-phosphoethanolamine. It carries out the reaction N-(acetyl)-sphing-4-enine + a 1,2-diacyl-sn-glycero-3-phosphocholine = 1-O-acyl-N-(acetyl)-sphing-4-enine + a 2-acyl-sn-glycero-3-phosphocholine. The catalysed reaction is 1-hexadecanoyl-2-(9Z-octadecenoyl)-sn-glycero-3-phosphocholine + N-(acetyl)-sphing-4-enine = 1-hexadecanoyl-N-(acetyl)-sphing-4-enine + 2-(9Z-octadecenoyl)-sn-glycero-3-phosphocholine. The enzyme catalyses 1-hexadecanoyl-2-(9Z,12Z-octadecadienoyl)-sn-glycero-3-phosphocholine + N-(acetyl)-sphing-4-enine = 2-(9Z,12Z-octadecadienoyl)-sn-glycero-3-phosphocholine + 1-hexadecanoyl-N-(acetyl)-sphing-4-enine. It catalyses the reaction 1-hexadecanoyl-2-(5Z,8Z,11Z,14Z-eicosatetraenoyl)-sn-glycero-3-phosphocholine + N-(acetyl)-sphing-4-enine = 1-hexadecanoyl-N-(acetyl)-sphing-4-enine + 2-(5Z,8Z,11Z,14Z)-eicosatetraenoyl-sn-glycero-3-phosphocholine. It carries out the reaction 1-hexadecanoyl-2-(4Z,7Z,10Z,13Z,16Z,19Z-docosahexaenoyl)-sn-glycero-3-phosphocholine + N-(acetyl)-sphing-4-enine = 2-(4Z,7Z,10Z,13Z,16Z,19Z-docosahexaenoyl)-sn-glycero-3-phosphocholine + 1-hexadecanoyl-N-(acetyl)-sphing-4-enine. The catalysed reaction is 1-hexadecanoyl-2-nonadioyl-sn-glycero-3-phosphocholine + N-(acetyl)-sphing-4-enine = 2-nonadioyl-sn-glycero-3-phosphocholine + 1-hexadecanoyl-N-(acetyl)-sphing-4-enine. The enzyme catalyses 1-octadecanoyl-2-(9Z-octadecenoyl)-sn-glycero-3-phosphocholine + N-(acetyl)-sphing-4-enine = 1-octadecanoyl-N-(acetyl)-sphing-4-enine + 2-(9Z-octadecenoyl)-sn-glycero-3-phosphocholine. It catalyses the reaction 1-(9Z)-octadecenoyl-2-octadecanoyl-sn-glycero-3-phosphocholine + N-(acetyl)-sphing-4-enine = 2-octadecanoyl-sn-glycero-3-phosphocholine + 1-(9Z-octadecenoyl)-N-(acetyl)-sphing-4-enine. It carries out the reaction 1-octadecanoyl-2-(5Z,8Z,11Z,14Z-eicosatetraenoyl)-sn-glycero-3-phosphocholine + N-(acetyl)-sphing-4-enine = 1-octadecanoyl-N-(acetyl)-sphing-4-enine + 2-(5Z,8Z,11Z,14Z)-eicosatetraenoyl-sn-glycero-3-phosphocholine. The catalysed reaction is 1-(9Z-octadecenoyl)-2-hexadecanoyl-sn-glycero-3-phosphocholine + N-(acetyl)-sphing-4-enine = 1-(9Z-octadecenoyl)-N-(acetyl)-sphing-4-enine + 2-hexadecanoyl-sn-glycero-3-phosphocholine. The enzyme catalyses N-(acetyl)-sphing-4-enine + a 1,2-diacyl-sn-glycero-3-phosphocholine = 1-O-acyl-N-(acetyl)-sphing-4-enine + a 1-acyl-sn-glycero-3-phosphocholine. It catalyses the reaction 1-hexadecanoyl-2-(9Z-octadecenoyl)-sn-glycero-3-phosphocholine + N-(acetyl)-sphing-4-enine = 1-(9Z-octadecenoyl)-N-(acetyl)-sphing-4-enine + 1-hexadecanoyl-sn-glycero-3-phosphocholine. It carries out the reaction 1-hexadecanoyl-2-(9Z,12Z-octadecadienoyl)-sn-glycero-3-phosphocholine + N-(acetyl)-sphing-4-enine = 1-(9Z,12Z-octadecadienoyl)-N-acetylsphing-4-enine + 1-hexadecanoyl-sn-glycero-3-phosphocholine. The catalysed reaction is 1-hexadecanoyl-2-(5Z,8Z,11Z,14Z-eicosatetraenoyl)-sn-glycero-3-phosphocholine + N-(acetyl)-sphing-4-enine = 1-(5Z,8Z,11Z,14Z)-eicosatetraenoyl-N-(acetyl)-sphing-4-enine + 1-hexadecanoyl-sn-glycero-3-phosphocholine. The enzyme catalyses 1-hexadecanoyl-2-(4Z,7Z,10Z,13Z,16Z,19Z-docosahexaenoyl)-sn-glycero-3-phosphocholine + N-(acetyl)-sphing-4-enine = 1-(4Z,7Z,10Z,13Z,16Z,19Z-docosahexaenoyl)-N-(acetyl)-sphing-4-enine + 1-hexadecanoyl-sn-glycero-3-phosphocholine. It catalyses the reaction 1-octadecanoyl-2-(9Z-octadecenoyl)-sn-glycero-3-phosphocholine + N-(acetyl)-sphing-4-enine = 1-(9Z-octadecenoyl)-N-(acetyl)-sphing-4-enine + 1-octadecanoyl-sn-glycero-3-phosphocholine. It carries out the reaction 1-octadecanoyl-2-(9Z,12Z)-octadecadienoyl-sn-glycero-3-phosphocholine + N-(acetyl)-sphing-4-enine = 1-(9Z,12Z-octadecadienoyl)-N-acetylsphing-4-enine + 1-octadecanoyl-sn-glycero-3-phosphocholine. The catalysed reaction is 1-(9Z-octadecenoyl)-2-hexadecanoyl-sn-glycero-3-phosphocholine + N-(acetyl)-sphing-4-enine = 1-hexadecanoyl-N-(acetyl)-sphing-4-enine + 1-(9Z-octadecenoyl)-sn-glycero-3-phosphocholine. The enzyme catalyses 1-(9Z)-octadecenoyl-2-octadecanoyl-sn-glycero-3-phosphocholine + N-(acetyl)-sphing-4-enine = 1-octadecanoyl-N-(acetyl)-sphing-4-enine + 1-(9Z-octadecenoyl)-sn-glycero-3-phosphocholine. It catalyses the reaction 1,2-di-(9Z-octadecenoyl)-sn-glycero-3-phosphocholine + N-(acetyl)-sphing-4-enine = 1-(9Z-octadecenoyl)-N-(acetyl)-sphing-4-enine + 1-(9Z-octadecenoyl)-sn-glycero-3-phosphocholine. It carries out the reaction 1-octadecanoyl-2-(5Z,8Z,11Z,14Z-eicosatetraenoyl)-sn-glycero-3-phosphocholine + N-(acetyl)-sphing-4-enine = 1-(5Z,8Z,11Z,14Z)-eicosatetraenoyl-N-(acetyl)-sphing-4-enine + 1-octadecanoyl-sn-glycero-3-phosphocholine. The catalysed reaction is a 1,2-diacyl-sn-glycero-3-phospho-L-serine + N-(acetyl)-sphing-4-enine = a 2-acyl-sn-glycero-3-phospho-L-serine + 1-O-acyl-N-(acetyl)-sphing-4-enine. The enzyme catalyses 1-octadecanoyl-2-(9Z-octadecenoyl)-sn-glycero-3-phospho-L-serine + N-(acetyl)-sphing-4-enine = 2-(9Z-octadecenoyl)-sn-glycero-3-phospho-L-serine + 1-octadecanoyl-N-(acetyl)-sphing-4-enine. It catalyses the reaction a 1,2-diacyl-sn-glycero-3-phospho-L-serine + N-(acetyl)-sphing-4-enine = 1-O-acyl-N-(acetyl)-sphing-4-enine + a 1-acyl-sn-glycero-3-phospho-L-serine. It carries out the reaction 1-octadecanoyl-2-(9Z-octadecenoyl)-sn-glycero-3-phospho-L-serine + N-(acetyl)-sphing-4-enine = 1-octadecanoyl-sn-glycero-3-phosphoserine + 1-(9Z-octadecenoyl)-N-(acetyl)-sphing-4-enine. The catalysed reaction is a 1,2-diacyl-sn-glycero-3-phospho-(1'-sn-glycerol) + N-(acetyl)-sphing-4-enine = 2-acyl-sn-glycero-3-phospho-(1'-sn-glycerol) + 1-O-acyl-N-(acetyl)-sphing-4-enine. The enzyme catalyses 1-octadecanoyl-2-(9Z-octadecenoyl)-sn-glycero-3-phospho-(1'-sn-glycerol) + N-(acetyl)-sphing-4-enine = 2-(9Z-octadecenoyl)-sn-glycero-3-phospho-(1'-sn-glycerol) + 1-octadecanoyl-N-(acetyl)-sphing-4-enine. It catalyses the reaction a 1,2-diacyl-sn-glycero-3-phospho-(1'-sn-glycerol) + N-(acetyl)-sphing-4-enine = 1-O-acyl-N-(acetyl)-sphing-4-enine + 1-acyl-sn-glycero-3-phospho-(1'-sn-glycerol). It carries out the reaction 1-octadecanoyl-2-(9Z-octadecenoyl)-sn-glycero-3-phospho-(1'-sn-glycerol) + N-(acetyl)-sphing-4-enine = 1-octadecanoyl-sn-glycero-3-phospho-(1'-sn-glycerol) + 1-(9Z-octadecenoyl)-N-(acetyl)-sphing-4-enine. The catalysed reaction is an N-acylethanolamine + a 1,2-diacyl-sn-glycero-3-phosphocholine = 2-(acylamino)ethyl fatty acid + a 2-acyl-sn-glycero-3-phosphocholine. The enzyme catalyses an N-acylethanolamine + a 1,2-diacyl-sn-glycero-3-phosphocholine = 2-(acylamino)ethyl fatty acid + a 1-acyl-sn-glycero-3-phosphocholine. It catalyses the reaction N-(5Z,8Z,11Z,14Z-eicosatetraenoyl)-ethanolamine + 1,2-di-(9Z-octadecenoyl)-sn-glycero-3-phosphocholine = 2-[(5Z,8Z,11Z,14Z)-eicosatetraenoylamino]ethyl (9Z)-octadecenoate + (9Z-octadecenoyl)-sn-glycero-3-phosphocholine. It carries out the reaction N-(9Z-octadecenoyl) ethanolamine + 1,2-di-(9Z-octadecenoyl)-sn-glycero-3-phosphocholine = 2-[(9Z)-octadecenoylamino]ethyl (9Z)-octadecenoate + (9Z-octadecenoyl)-sn-glycero-3-phosphocholine. The catalysed reaction is a 3-acyl-sn-glycerol + a 1,2-diacyl-sn-glycero-3-phosphocholine = a 1,3-diacylglycerol + a 1-acyl-sn-glycero-3-phosphocholine. The enzyme catalyses a 3-acyl-sn-glycerol + a 1,2-diacyl-sn-glycero-3-phosphocholine = a 1,3-diacylglycerol + a 2-acyl-sn-glycero-3-phosphocholine. It catalyses the reaction 3-(9Z-octadecenoyl)-sn-glycerol + 1,2-di-(9Z-octadecenoyl)-sn-glycero-3-phosphocholine = 1,3-di-(9Z-octadecenoyl)-glycerol + (9Z-octadecenoyl)-sn-glycero-3-phosphocholine. It carries out the reaction 3-hexadecanoyl-sn-glycerol + 1,2-di-(9Z-octadecenoyl)-sn-glycero-3-phosphocholine = 1-(9Z)-octadecenoyl-3-hexadecanoyl-sn-glycerol + (9Z-octadecenoyl)-sn-glycero-3-phosphocholine. The catalysed reaction is a 1-acyl-sn-glycerol + a 1,2-diacyl-sn-glycero-3-phosphocholine = a 1,3-diacylglycerol + a 2-acyl-sn-glycero-3-phosphocholine. The enzyme catalyses a 1-acyl-sn-glycerol + a 1,2-diacyl-sn-glycero-3-phosphocholine = a 1,3-diacylglycerol + a 1-acyl-sn-glycero-3-phosphocholine. It catalyses the reaction 1-(9Z-octadecenoyl)-sn-glycerol + 1,2-di-(9Z-octadecenoyl)-sn-glycero-3-phosphocholine = 1,3-di-(9Z-octadecenoyl)-glycerol + (9Z-octadecenoyl)-sn-glycero-3-phosphocholine. It carries out the reaction 1-hexadecanoyl-sn-glycerol + 1,2-di-(9Z-octadecenoyl)-sn-glycero-3-phosphocholine = 1-hexadecanoyl-3-(9Z)-octadecenoyl-sn-glycerol + (9Z-octadecenoyl)-sn-glycero-3-phosphocholine. The catalysed reaction is a 2-acylglycerol + a 1,2-diacyl-sn-glycero-3-phosphocholine = a 1,2-diacylglycerol + a 2-acyl-sn-glycero-3-phosphocholine. The enzyme catalyses a 2-acylglycerol + a 1,2-diacyl-sn-glycero-3-phosphocholine = a 1,2-diacylglycerol + a 1-acyl-sn-glycero-3-phosphocholine. It catalyses the reaction 2-hexadecanoylglycerol + 1,2-di-(9Z-octadecenoyl)-sn-glycero-3-phosphocholine = 1-(9Z)-octadecenoyl-2-hexadecanoylglycerol + (9Z-octadecenoyl)-sn-glycero-3-phosphocholine. It carries out the reaction 1-O-alkylglycerol + a 1,2-diacyl-sn-glycero-3-phosphocholine = 1-O-alkyl-3-acylglycerol + a 1-acyl-sn-glycero-3-phosphocholine. The catalysed reaction is 1-O-alkylglycerol + a 1,2-diacyl-sn-glycero-3-phosphocholine = 1-O-alkyl-3-acylglycerol + a 2-acyl-sn-glycero-3-phosphocholine. The enzyme catalyses 1-O-hexadecylglycerol + 1,2-di-(9Z-octadecenoyl)-sn-glycero-3-phosphocholine = 1-O-hexadecyl-3-(9Z)-octadecenoylglycerol + (9Z-octadecenoyl)-sn-glycero-3-phosphocholine. It catalyses the reaction 1-O-alkyl-2-acyl-sn-glycerol + a 1,2-diacyl-sn-glycero-3-phosphocholine = 1-O-alkyl-2,3-diacyl-sn-glycerol + a 2-acyl-sn-glycero-3-phosphocholine. It carries out the reaction 1-O-alkyl-2-acyl-sn-glycerol + a 1,2-diacyl-sn-glycero-3-phosphocholine = 1-O-alkyl-2,3-diacyl-sn-glycerol + a 1-acyl-sn-glycero-3-phosphocholine. The catalysed reaction is 1-O-hexadecyl-2-acetyl-sn-glycerol + 1,2-di-(9Z-octadecenoyl)-sn-glycero-3-phosphocholine = 1-O-hexadecyl-2-acetyl-3-(9Z)-octadecenoyl-sn-glycerol + (9Z-octadecenoyl)-sn-glycero-3-phosphocholine. The enzyme catalyses 1-O-hexadecyl-2-O-methyl-sn-glycerol + 1,2-di-(9Z-octadecenoyl)-sn-glycero-3-phosphocholine = 1-O-hexadecyl-2-O-methyl-3-(9Z)-octadecenoyl-sn-glycerol + (9Z-octadecenoyl)-sn-glycero-3-phosphocholine. It catalyses the reaction a 1,2-diacyl-sn-glycero-3-phosphoethanolamine + H2O = a 1-acyl-sn-glycero-3-phosphoethanolamine + a fatty acid + H(+). It carries out the reaction 1-acyl-2-(5Z,8Z,11Z,14Z)-eicosatetraenoyl-sn-glycero-3-phosphoethanolamine + H2O = a 1-acyl-sn-glycero-3-phosphoethanolamine + (5Z,8Z,11Z,14Z)-eicosatetraenoate + H(+). The catalysed reaction is a 1,2-diacyl-sn-glycero-3-phospho-(1'-sn-glycerol) + H2O = 1-acyl-sn-glycero-3-phospho-(1'-sn-glycerol) + a fatty acid + H(+). The enzyme catalyses 1-hexadecanoyl-2-(9Z-octadecenoyl)-sn-glycero-3-phospho-(1'-sn-glycerol) + H2O = 1-hexadecanoyl-sn-glycero-3-phospho-(1'-sn-glycerol) + (9Z)-octadecenoate + H(+). It catalyses the reaction a 1,2-diacyl-sn-glycero-3-phospho-(1'-sn-glycerol) + H2O = 2-acyl-sn-glycero-3-phospho-(1'-sn-glycerol) + a fatty acid + H(+). It carries out the reaction 1-hexadecanoyl-2-(9Z-octadecenoyl)-sn-glycero-3-phospho-(1'-sn-glycerol) + H2O = 2-(9Z-octadecenoyl)-sn-glycero-3-phospho-(1'-sn-glycerol) + hexadecanoate + H(+). Its activity is regulated as follows. Phospholipase sn-2 versus sn-1 positional specificity is affected by the phospholipid composition of membranes. Phospholipase A2 activity toward 1-hexadecanoyl-2-(5Z,8Z,11Z,14Z-eicosatetraenoyl)-sn-glycero-3-phosphocholine (PAPE) is enhanced in the presence of 1,2-dioleoyl-sn-glycero-3-phosphocholine (DOPC), which promotes lipid bilayer formation. O-acyltransferase activity is inhibited by antiarrhythmic drug amiodarone. Functionally, has dual calcium-independent phospholipase and O-acyltransferase activities with a potential role in glycerophospholipid homeostasis and remodeling of acyl groups of lipophilic alcohols present in acidic cellular compartments. Catalyzes hydrolysis of the ester bond of the fatty acyl group attached at sn-1 or sn-2 position of phospholipids (phospholipase A1 or A2 activity) and transfer it to the hydroxyl group at the first carbon of lipophilic alcohols (O-acyltransferase activity). Among preferred fatty acyl donors are phosphatidylcholines, phosphatidylethanolamines, phosphatidylglycerols and phosphatidylserines. Favors sn-2 over sn-1 deacylation of unsaturated fatty acyl groups of phosphatidylcholines, phosphatidylethanolamines, and phosphatidylglycerols. Among preferred fatty acyl acceptors are natural lipophilic alcohols including short-chain ceramide N-acetyl-sphingosine (C2 ceramide), alkylacylglycerols, monoacylglycerols, and acylethanolamides such as anandamide and oleoylethanolamide. Selectively hydrolyzes the sn-1 fatty acyl group of truncated oxidized phospholipids and may play a role in detoxification of reactive oxidized phospholipids during oxidative stress. Required for normal phospholipid degradation in alveolar macrophages with potential implications in the clearance of pulmonary surfactant, which is mainly composed of dipalmitoylphosphatidylcholine (1,2-dihexadecanoyl-sn-glycero-3-phosphocholine). Involved in the first step of bis(monoacylglycero)phosphate (BMP) de novo synthesis from phosphatidylglycerol (1,2-diacyl-sn-glycero-3-phospho-(1'-sn-glycerol), PG). BMP is an important player in cargo sorting and degradation, regulation of cellular cholesterol levels and intercellular communication. At neutral pH, hydrolyzes the sn-1 fatty acyl group of the lysophosphatidylcholines. This is Lysosomal phospholipase A and acyltransferase from Mus musculus (Mouse).